An 854-amino-acid chain; its full sequence is Nucleolar MIF4G domain-containing protein 1 (854 aa).

Residues 2–275 (PRNVPEVNGV…EEDPDWQVLQ (274 aa)) are necessary for nucleolar localization and for targeting PPP1CA to the nucleolus. At Ser60 the chain carries Phosphoserine. 2 disordered regions span residues 66–215 (ESRS…PLSF) and 231–333 (SGGG…GEKY). The span at 76-99 (PGGRKSRKELRKEKRHLRKARRLQ) shows a compositional bias: basic residues. Residues 104 to 113 (SGSGDQGGNV) are compositionally biased toward gly residues. Residues 128–173 (VRPTPAKATATPAKASAPSTNTKASAAQPKAKAKGAPGKPGPATAT) are compositionally biased toward low complexity. Over residues 188–197 (REIRKLERCL) the composition is skewed to basic and acidic residues. The segment covering 265–280 (SEEDPDWQVLQEDQED) has biased composition (acidic residues). Composition is skewed to basic and acidic residues over residues 281-291 (VNSKRRGEAES), 303-315 (RFAE…RSSS), and 322-331 (QESHSVESGE). The Required for efficient binding to PPP1CA and for targeting PPP1CA to the nucleolus motif lies at 301-304 (KVRF). A phosphoserine mark is found at Ser311, Ser314, and Ser315. One can recognise an MIF4G domain in the interval 356-553 (KKHVKGLINR…ETMLALKNND (198 aa)). Positions 648–764 (DVRRIIFCTL…PLSVLKVVEF (117 aa)) constitute an MI domain.

It belongs to the CWC22 family. As to quaternary structure, may interact with EIF4A1, EIF4A2 and EIF4A3. Interacts with PPP1CA and PPP1CC.

Its subcellular location is the nucleus. The protein localises to the nucleolus. Its function is as follows. Plays a role in targeting PPP1CA to the nucleolus. This Mus musculus (Mouse) protein is Nucleolar MIF4G domain-containing protein 1 (Nom1).